Reading from the N-terminus, the 355-residue chain is uncharacterized protein (355 aa).

The transit peptide at 1–49 directs the protein to the chloroplast; it reads MPMTVVSGRFSTALLPTCFSLSRLHSVKYAAQRRVVFVSRSAHASSASV.

The protein belongs to the methyltransferase superfamily.

The protein resides in the plastid. It localises to the chloroplast. It is found in the plastoglobule. This is an uncharacterized protein from Arabidopsis thaliana (Mouse-ear cress).